Consider the following 510-residue polypeptide: 1,3-beta-glucanosyltransferase gas5 (510 aa).

The signal sequence occupies residues 1-22 (MNFLHFLTTSLLLLGGSRLALA). A disulfide bond links Cys-70 and Cys-99. Residue Tyr-88 participates in (1,3-beta-D-glucosyl)n binding. Asn-147 carries N-linked (GlcNAc...) asparagine glycosylation. (1,3-beta-D-glucosyl)n contacts are provided by Asn-158, Glu-159, Asp-200, and Arg-205. The active-site Proton donor is the Glu-159. 2 cysteine pairs are disulfide-bonded: Cys-214–Cys-353 and Cys-232–Cys-264. Residues Asn-216 and Asn-252 are each glycosylated (N-linked (GlcNAc...) asparagine). The active-site Nucleophile is the Glu-261. Tyr-300 is a (1,3-beta-D-glucosyl)n binding site. N-linked (GlcNAc...) asparagine glycans are attached at residues Asn-318, Asn-337, and Asn-397. Residues 424–456 (QSSTSGSSSGSSSASTTASSSSVSSGSSISSGS) form a disordered region. A lipid anchor (GPI-anchor amidated serine) is attached at Ser-485. Positions 486-510 (SASTFNLSRFYVFAGILAISGLVFA) are cleaved as a propeptide — removed in mature form. A glycan (N-linked (GlcNAc...) asparagine) is linked at Asn-491.

Belongs to the glycosyl hydrolase 72 family. The GPI-anchor is attached to the protein in the endoplasmic reticulum and serves to target the protein to the cell surface. There, the glucosamine-inositol phospholipid moiety is cleaved off and the GPI-modified mannoprotein is covalently attached via its lipidless GPI glycan remnant to the 1,6-beta-glucan of the outer cell wall layer.

It localises to the secreted. Its subcellular location is the cell wall. The protein localises to the membrane. Splits internally a 1,3-beta-glucan molecule and transfers the newly generated reducing end (the donor) to the non-reducing end of another 1,3-beta-glucan molecule (the acceptor) forming a 1,3-beta linkage, resulting in the elongation of 1,3-beta-glucan chains in the cell wall. The polypeptide is 1,3-beta-glucanosyltransferase gas5 (gas5) (Schizosaccharomyces pombe (strain 972 / ATCC 24843) (Fission yeast)).